We begin with the raw amino-acid sequence, 889 residues long: MSAPKVTPMVRQYLSIKAEHPDSILFFRMGDFYEMFFEDAEKASKALDITLTSRNKNDPDPVPMCGVPHHSANGYVARLVEQGFKVAICDQVQDPSEAKGLVERKVVQVVTPGMQLDGRYLDASQNNFVCAAVTGRGGVGLAFLDISTGAFLVTQVTTPESAFQEILRMGPKELVLPEKFEENARAAAAMRMADQLPTSRLEGKDFENARTRDRLLEHFKTRSLEGFGIQDLPLAVRAAGALLHYVQQAQRQEITHVTKIQAYFQDQFLWIDDNSARNLELLKNIRNGTRQGALISVLDKTVTAMGARLMSYLLRYPLIDPQVINLRLDAVEQAKDLARVRDEVREALKEVHDLERLRSRTALGHANGRDLAAMGESLKQLPRLWALLKENFESPLLCGEATDDGLTDVADLIDRSIREDAPPGVRDGGMIKPGFNEELDEVAALATDVKGLIAGLEAQEKERTGISTLKVRYNKVFGYYIEISKNQTKSIPPHYVRKQTLVNAERYITDELKEFETKVLGAEERRVALEYNIFTQIVDRINGENDRLEKASHLIAWVDVLAALGHVADHNGYCRPVVDMGQTLDLQESRHPVVEKMLPGQRFVPNNIAMNNLDQQILMITGPNMAGKSTVLRQAALCVIMAQMGSFVPAEKAVVGVVDKIFTRVGALDNLSQGESTFMVEMQETANILNNVSHRSLVILDEIGRGTSTFDGLSIAWAVAEYLHDYKDHGVKTMFATHYHELTDLTKTHPRVKNFNIAVNEWNDEIIFLHSLVEGGTNKSYGIQVARLAGIPASVIRRSKQVLQTIEDSEEARVAYSAKASGKSGKKDVQVQMSLFPTPGELAAQALERMDINVMTPLEAMNVLSELQQRVKRPEKAPADVTAETEDQE.

Residue 622-629 participates in ATP binding; the sequence is GPNMAGKS. Residues 869–889 form a disordered region; the sequence is QRVKRPEKAPADVTAETEDQE.

It belongs to the DNA mismatch repair MutS family.

Functionally, this protein is involved in the repair of mismatches in DNA. It is possible that it carries out the mismatch recognition step. This protein has a weak ATPase activity. The sequence is that of DNA mismatch repair protein MutS from Desulfatibacillum aliphaticivorans.